A 476-amino-acid chain; its full sequence is Calcitonin gene-related peptide type 1 receptor (476 aa).

Residues 1–33 (METLQMGLLSRSALFKYIIIFLIMINTRGYVLA) form the signal peptide. Topologically, residues 34-154 (SQEQEAKTSV…FTHEKVKTAL (121 aa)) are extracellular. 3 disulfide bridges follow: cysteine 63–cysteine 89, cysteine 80–cysteine 120, and cysteine 103–cysteine 142. Residues asparagine 81, asparagine 133, and asparagine 138 are each glycosylated (N-linked (GlcNAc...) asparagine). A helical membrane pass occupies residues 155–179 (NLYYLTIIGHGLSIASLLISLGIFF). Over 180–190 (YFKNLSCQRIT) the chain is Cytoplasmic. A helical membrane pass occupies residues 191 to 213 (LHKNLFFSFVCNSIITIISLSAV). The Extracellular segment spans residues 214–224 (ANNQALVATNP). Residues 225-253 (VICKISQFIHLYLMGCNYFWMLCEGIYLH) traverse the membrane as a helical segment. The Cytoplasmic segment spans residues 254–267 (TLIVVAVFAEKQHL). Residues 268–288 (MWYYLLGWGFPLIPACIHAVA) traverse the membrane as a helical segment. The Extracellular portion of the chain corresponds to 289–304 (RSLYYNDNCWISSETH). The helical transmembrane segment at 305 to 329 (LLYIIHGPICAALLVNLFFLLNIVR) threads the bilayer. Over 330 to 344 (VLITKLKVTHQAESN) the chain is Cytoplasmic. The helical transmembrane segment at 345–366 (LYMKAVRATLILVPLLGIEFVL) threads the bilayer. Over 367-381 (FPWKPEGRIAEEIYD) the chain is Extracellular. The chain crosses the membrane as a helical span at residues 382-402 (YVMHILMHYQGLLVATIFCFF). The Cytoplasmic portion of the chain corresponds to 403 to 476 (NGEVQAVLKR…VFFKTEKQYM (74 aa)).

This sequence belongs to the G-protein coupled receptor 2 family.

Its subcellular location is the cell membrane. Its function is as follows. May function as G protein-coupled receptor for calcitonin-gene-related peptides and adrenomedullin. Specificity may be modulated by accessory proteins. May activate cAMP-dependent pathway. In Xenopus laevis (African clawed frog), this protein is Calcitonin gene-related peptide type 1 receptor (calcrl).